Here is a 305-residue protein sequence, read N- to C-terminus: Acetaldehyde dehydrogenase (305 aa).

13-16 (SGNI) contacts NAD(+). Cys128 (acyl-thioester intermediate) is an active-site residue. NAD(+)-binding positions include 159-167 (SAGPGTRQN) and Asn278.

It belongs to the acetaldehyde dehydrogenase family.

It carries out the reaction acetaldehyde + NAD(+) + CoA = acetyl-CoA + NADH + H(+). In Roseiflexus sp. (strain RS-1), this protein is Acetaldehyde dehydrogenase.